The following is a 307-amino-acid chain: Small ribosomal subunit biogenesis GTPase RsgA (307 aa).

The tract at residues 1 to 20 (MPSEHPFSDGISTPNPKETM) is disordered. A compositionally biased stretch (polar residues) spans 10 to 20 (GISTPNPKETM). The 158-residue stretch at 85-242 (RQDAWKTKLI…LIDSPGLQEF (158 aa)) folds into the CP-type G domain. GTP contacts are provided by residues 135-138 (NKAD) and 184-192 (GQSGMGKST). Positions 266, 271, 273, and 279 each coordinate Zn(2+).

This sequence belongs to the TRAFAC class YlqF/YawG GTPase family. RsgA subfamily. In terms of assembly, monomer. Associates with 30S ribosomal subunit, binds 16S rRNA. The cofactor is Zn(2+).

It is found in the cytoplasm. Its function is as follows. One of several proteins that assist in the late maturation steps of the functional core of the 30S ribosomal subunit. Helps release RbfA from mature subunits. May play a role in the assembly of ribosomal proteins into the subunit. Circularly permuted GTPase that catalyzes slow GTP hydrolysis, GTPase activity is stimulated by the 30S ribosomal subunit. In Neisseria meningitidis serogroup C / serotype 2a (strain ATCC 700532 / DSM 15464 / FAM18), this protein is Small ribosomal subunit biogenesis GTPase RsgA.